Here is a 1238-residue protein sequence, read N- to C-terminus: Topoisomerase 1-associated factor 1 (1238 aa).

Phosphoserine is present on residues Ser-626 and Ser-654. The interval 1008–1051 is disordered; the sequence is GIARSKKKDKRKRRKGEAKTNLPMFGDQDDERPQTVRERHGVFS. A compositionally biased stretch (basic residues) spans 1010-1023; it reads ARSKKKDKRKRRKG. The segment covering 1038–1050 has biased composition (basic and acidic residues); that stretch reads ERPQTVRERHGVF. Phosphoserine occurs at positions 1056 and 1058. The segment at 1159–1218 is disordered; that stretch reads NNNNNQLSDDDVNSESRNSLGSSQPSNSQNMFQSEVYSRKESTKRSLEASAADESDEDEE. Polar residues predominate over residues 1173–1194; it reads ESRNSLGSSQPSNSQNMFQSEV. Basic and acidic residues predominate over residues 1195 to 1205; sequence YSRKESTKRSL. The span at 1209–1218 shows a compositional bias: acidic residues; the sequence is AADESDEDEE. A Phosphoserine modification is found at Ser-1213.

This sequence belongs to the timeless family. As to quaternary structure, component of the fork protection complex (FPC) consisting of TOF1 and CSM3. Interacts with WSS1 and ESC4.

It localises to the nucleus. Forms a fork protection complex (FPC) with CSM3 and which is required for chromosome segregation during meiosis and DNA damage repair. FPC coordinates leading and lagging strand synthesis and moves with the replication fork. FPC stabilizes replication forks in a configuration that is recognized by replication checkpoint sensors and protects stalled replication forks against the fork-releasing activity of RRM3 helicase. This is Topoisomerase 1-associated factor 1 (TOF1) from Saccharomyces cerevisiae (strain ATCC 204508 / S288c) (Baker's yeast).